The sequence spans 226 residues: MTTANPGDRLGLLGRKVGMMRIFTDDGDAVPVTVLDVSNNRVTQVKTVETDGYSAIQVTFGARKASRVTKPEAGHLAKAGVEAGEILREFAVSAEVAAEYKPGGTLPVGLFAAGQKVDVQGTSIGKGFTGTIKRHNFGSQRASHGNSRSHNVPGSISMAQDPGRVFPGKKMSGHRGDVTKTTQNLDIVRVDEARQLLLVRGAVPGAKNGFVTVRPAVKVKAKKGAN.

The interval 136–162 (NFGSQRASHGNSRSHNVPGSISMAQDP) is disordered. Residues 137–158 (FGSQRASHGNSRSHNVPGSISM) show a composition bias toward polar residues. Glutamine 160 carries the post-translational modification N5-methylglutamine.

The protein belongs to the universal ribosomal protein uL3 family. Part of the 50S ribosomal subunit. Forms a cluster with proteins L14 and L19. Methylated by PrmB.

Its function is as follows. One of the primary rRNA binding proteins, it binds directly near the 3'-end of the 23S rRNA, where it nucleates assembly of the 50S subunit. The protein is Large ribosomal subunit protein uL3 of Methylibium petroleiphilum (strain ATCC BAA-1232 / LMG 22953 / PM1).